A 321-amino-acid chain; its full sequence is uncharacterized protein (321 aa).

Basic and acidic residues predominate over residues 1-12 (MQGGREVGRESV). The interval 1 to 85 (MQGGREVGRE…GWGEFEGFQE (85 aa)) is disordered. Residues 53–67 (NANSSRLDEGLSSSR) show a composition bias toward polar residues.

This is an uncharacterized protein from Rattus norvegicus (Rat).